The chain runs to 646 residues: Translation initiation factor IF-2 (646 aa).

The 170-residue stretch at 146-315 (PRPPVVTVMG…LLVAEMEELR (170 aa)) folds into the tr-type G domain. The tract at residues 155–162 (GHVDHGKT) is G1. 155–162 (GHVDHGKT) contributes to the GTP binding site. Residues 180-184 (GITQH) are G2. Residues 201–204 (DTPG) are G3. GTP is bound by residues 201–205 (DTPGH) and 255–258 (NKID). Residues 255 to 258 (NKID) form a G4 region. The segment at 291–293 (SAK) is G5.

It belongs to the TRAFAC class translation factor GTPase superfamily. Classic translation factor GTPase family. IF-2 subfamily.

The protein resides in the cytoplasm. In terms of biological role, one of the essential components for the initiation of protein synthesis. Protects formylmethionyl-tRNA from spontaneous hydrolysis and promotes its binding to the 30S ribosomal subunits. Also involved in the hydrolysis of GTP during the formation of the 70S ribosomal complex. This Clostridioides difficile (strain 630) (Peptoclostridium difficile) protein is Translation initiation factor IF-2.